The primary structure comprises 136 residues: Cell division protein SepF 3 (136 aa).

It belongs to the SepF family. As to quaternary structure, homodimer. Interacts with FtsZ.

It localises to the cytoplasm. Functionally, cell division protein that is part of the divisome complex and is recruited early to the Z-ring. Probably stimulates Z-ring formation, perhaps through the cross-linking of FtsZ protofilaments. Its function overlaps with FtsA. The polypeptide is Cell division protein SepF 3 (Streptomyces coelicolor (strain ATCC BAA-471 / A3(2) / M145)).